The following is a 373-amino-acid chain: Histidinol-phosphate aminotransferase 2 (373 aa).

Lysine 229 carries the N6-(pyridoxal phosphate)lysine modification.

Belongs to the class-II pyridoxal-phosphate-dependent aminotransferase family. Histidinol-phosphate aminotransferase subfamily. As to quaternary structure, homodimer. Requires pyridoxal 5'-phosphate as cofactor.

It catalyses the reaction L-histidinol phosphate + 2-oxoglutarate = 3-(imidazol-4-yl)-2-oxopropyl phosphate + L-glutamate. It participates in amino-acid biosynthesis; L-histidine biosynthesis; L-histidine from 5-phospho-alpha-D-ribose 1-diphosphate: step 7/9. The polypeptide is Histidinol-phosphate aminotransferase 2 (Hydrogenovibrio crunogenus (strain DSM 25203 / XCL-2) (Thiomicrospira crunogena)).